Here is a 192-residue protein sequence, read N- to C-terminus: Protein CREG1 (192 aa).

The signal sequence occupies residues 1–18 (MVLLAFLCAAALAALARG). N-linked (GlcNAc...) asparagine glycans are attached at residues Asn-95, Asn-133, and Asn-166.

The protein belongs to the CREG family.

The protein localises to the secreted. Its function is as follows. May contribute to the transcriptional control of cell growth and differentiation. The polypeptide is Protein CREG1 (CREG1) (Gallus gallus (Chicken)).